We begin with the raw amino-acid sequence, 147 residues long: Thyrotropin subunit beta (147 aa).

An N-terminal signal peptide occupies residues Met1–Ser20. Cystine bridges form between Cys22–Cys72, Cys36–Cys87, Cys39–Cys126, Cys47–Cys103, Cys51–Cys105, and Cys108–Cys115. Residue Asn43 is glycosylated (N-linked (GlcNAc...) asparagine).

This sequence belongs to the glycoprotein hormones subunit beta family. As to quaternary structure, heterodimer of a common alpha chain and a unique beta chain which confers biological specificity to thyrotropin, lutropin, follitropin and gonadotropin.

It localises to the secreted. Its function is as follows. Indispensable for the control of thyroid structure and metabolism. May play some role in the biological processes of the immature fishes. In Anguilla anguilla (European freshwater eel), this protein is Thyrotropin subunit beta (tshb).